Here is a 388-residue protein sequence, read N- to C-terminus: Succinate--CoA ligase [ADP-forming] subunit beta (388 aa).

The region spanning 9–244 (KALFAEYGLP…PSQDDAREAH (236 aa)) is the ATP-grasp domain. ATP contacts are provided by residues Lys46, 53–55 (GRG), Glu99, Thr102, and Glu107. Mg(2+)-binding residues include Asn199 and Asp213. Residues Asn264 and 321–323 (GIV) each bind substrate.

Belongs to the succinate/malate CoA ligase beta subunit family. Heterotetramer of two alpha and two beta subunits. It depends on Mg(2+) as a cofactor.

It carries out the reaction succinate + ATP + CoA = succinyl-CoA + ADP + phosphate. The catalysed reaction is GTP + succinate + CoA = succinyl-CoA + GDP + phosphate. The protein operates within carbohydrate metabolism; tricarboxylic acid cycle; succinate from succinyl-CoA (ligase route): step 1/1. Functionally, succinyl-CoA synthetase functions in the citric acid cycle (TCA), coupling the hydrolysis of succinyl-CoA to the synthesis of either ATP or GTP and thus represents the only step of substrate-level phosphorylation in the TCA. The beta subunit provides nucleotide specificity of the enzyme and binds the substrate succinate, while the binding sites for coenzyme A and phosphate are found in the alpha subunit. The sequence is that of Succinate--CoA ligase [ADP-forming] subunit beta from Shewanella pealeana (strain ATCC 700345 / ANG-SQ1).